A 263-amino-acid chain; its full sequence is Receptor-transporting protein 1 (263 aa).

Residues 1-238 (MRIFRPWRLR…ETGSGWNFCS (238 aa)) lie on the Cytoplasmic side of the membrane. Residues 88 to 197 (ASGRFHCSWC…GEFCEACQEG (110 aa)) form a 3CxxC-type zinc finger. Residues 239 to 259 (IPWCLFWATVLLLIIYLQLSF) traverse the membrane as a helical segment. Residues 260 to 263 (RSSV) lie on the Extracellular side of the membrane.

It belongs to the TMEM7 family. In terms of assembly, interacts with olfactory receptors.

The protein resides in the cell membrane. Its function is as follows. Specifically promotes functional cell surface expression of olfactory receptors, but not of other GPCRs. This chain is Receptor-transporting protein 1 (RTP1), found in Macaca fascicularis (Crab-eating macaque).